Here is a 424-residue protein sequence, read N- to C-terminus: Histidine--tRNA ligase (424 aa).

Belongs to the class-II aminoacyl-tRNA synthetase family. In terms of assembly, homodimer.

The protein localises to the cytoplasm. The catalysed reaction is tRNA(His) + L-histidine + ATP = L-histidyl-tRNA(His) + AMP + diphosphate + H(+). The protein is Histidine--tRNA ligase of Shigella dysenteriae serotype 1 (strain Sd197).